A 678-amino-acid polypeptide reads, in one-letter code: MRTVVLTMKASVIEMFLVLLVTGVHSNKETAKKIKRPKFTVPQINCDVKAGKIIDPEFIVKCPAGCQDPKYHVYGTDVYASYSSVCGAAVHSGVLDNSGGKILVRKVAGQSGYKGSYSNGVQSLSLPRWRESFIVLESKPKKGVTYPSALTYSSSKSPAAQAGETTKAYQRPPIPGTTAQPVTLMQLLAVTVAVATPTTLPRPSPSAASTTSIPRPQSVGHRSQEMDLWSTATYTSSQNRPRADPGIQRQDPSGAAFQKPVGADVSLGLVPKEELSTQSLEPVSLGDPNCKIDLSFLIDGSTSIGKRRFRIQKQLLADVAQALDIGPAGPLMGVVQYGDNPATHFNLKTHTNSRDLKTAIEKITQRGGLSNVGRAISFVTKNFFSKANGNRSGAPNVVVVMVDGWPTDKVEEASRLARESGINIFFITIEGAAENEKQYVVEPNFANKAVCRTNGFYSLHVQSWFGLHKTLQPLVKRVCDTDRLACSKTCLNSADIGFVIDGSSSVGTGNFRTVLQFVTNLTKEFEISDTDTRIGAVQYTYEQRLEFGFDKYSSKPDILNAIKRVGYWSGGTSTGAAINFALEQLFKKSKPNKRKLMILITDGRSYDDVRIPAMAAHLKGVITYAIGVAWAAQEELEVIATHPARDHSFFVDEFDNLHQYVPRIIQNICTEFNSQPRN.

A signal peptide spans 1–26 (MRTVVLTMKASVIEMFLVLLVTGVHS). One can recognise an LCCL domain in the interval 40–133 (TVPQINCDVK…LSLPRWRESF (94 aa)). 2 cysteine pairs are disulfide-bonded: cysteine 46–cysteine 62 and cysteine 66–cysteine 86. Over residues 154–168 (SSKSPAAQAGETTKA) the composition is skewed to polar residues. Disordered stretches follow at residues 154–177 (SSKS…IPGT) and 199–257 (TLPR…GAAF). Positions 199–216 (TLPRPSPSAASTTSIPRP) are enriched in low complexity. Over residues 230-240 (STATYTSSQNR) the composition is skewed to polar residues. 2 consecutive VWFA domains span residues 293-478 (DLSF…VKRV) and 495-668 (DIGF…IQNI). N-linked (GlcNAc...) asparagine glycosylation is found at asparagine 390 and asparagine 520.

Binds dermatan sulfate and chondroitin sulfate.

It is found in the secreted. Its subcellular location is the extracellular space. It localises to the extracellular matrix. Its function is as follows. Promotes matrix assembly and cell adhesiveness. Plays a role in spinal cord formation by regulating the proliferation and differentiation of neural stem cells. This chain is Vitrin (VIT), found in Homo sapiens (Human).